Reading from the N-terminus, the 610-residue chain is UvrABC system protein C (610 aa).

A GIY-YIG domain is found at 16–94; the sequence is SQPGVYRMYD…IKLYQPRYNV (79 aa). One can recognise a UVR domain in the interval 204-239; sequence DQVLTQLISRMETASQNLEFEEAARIRDQIQAVRRV.

Belongs to the UvrC family. As to quaternary structure, interacts with UvrB in an incision complex.

The protein resides in the cytoplasm. Functionally, the UvrABC repair system catalyzes the recognition and processing of DNA lesions. UvrC both incises the 5' and 3' sides of the lesion. The N-terminal half is responsible for the 3' incision and the C-terminal half is responsible for the 5' incision. This is UvrABC system protein C from Escherichia coli (strain SMS-3-5 / SECEC).